The sequence spans 926 residues: MADPGKGRGRSLALLQALKKSQMMDSPSQSESQSPESTPEQSTAPSTIASATPSTSGVSIGGRGRAAALMLAKMQQKPGSTTPAIFVPPSSTSAPTAGTGRGFKLLQNLQASQKASSQIASSQVTSSAQSDIKDLTEKMSETSVSAQASSVAKNKYFREVKDTPPVVKKGETGVPIEVTCNYIYLNFKENIVFEYEVKFEPDQDYKHLRFKLLNEHIEHFKEKTFDGTTLYVPHELPDAVRNLVSTNPYDQSKVNVSIIFRRTRRLSEMIHIYNVMFKCIMKDLKLIRFGRQHYNEHAAIQIPQHKLEVWPGYVTAVDEYEGGLMLTLDSTHRVLRTQTVLSLIKEVVQTEGANWKRKMTDILIGASVMTTYNKKLFRVDTIDDKMSPRSTFEKTEKGETVQISFIDYYKKNYGIEIMDWDQPLLISRDTKRMPGSDTPTDFMICLIPELCQLTGLTDDQRSNFRLMKDVATYTRITPNQRHAAFKKYIESVMKNETAKSRLAGWGLSIAPETVNLTARTLPPETLYFGDNVRVPGKPNAEWNSEVTKHSVMQAVDIMRWVLLFTQRDKQVAMDFLSTLKRNCRPMGIMVSDAELVPLANDRTDTYVLALKKCITSSVQLVVAICSTKRDDRYAAIKKVCCADNPVPSQVINARTLMNTNKIRSITQKILLQLNCKLGGTLWSISIPFKSAMIVGIDSYHDPSRRNRSVCSFVASYNQSMTLWYSKVIFQEKGQEIVDGLKCCLVDALTHYLRSNGQLPDRIIIYRDGVGDGQLKLLQQYEIPQMKICFTILGSNYQPTLTYVVVQKRINTRIFLKSRDGYDNPNPGTVVDHCITRRDWYDFLIVSQKVTQGTVTPTHYVVVYDDSGITPDQCQRLTYKMCHLYYNWPGTVRVPAPCQYAHKLSYLVGQCVHAQPSDVLVDKLFFL.

A disordered region spans residues 1–62 (MADPGKGRGR…PSTSGVSIGG (62 aa)). A compositionally biased stretch (low complexity) spans 26–56 (SPSQSESQSPESTPEQSTAPSTIASATPSTS). Residues 339–455 (TVLSLIKEVV…LIPELCQLTG (117 aa)) enclose the PAZ domain. In terms of domain architecture, Piwi spans 620 to 912 (LVVAICSTKR…LSYLVGQCVH (293 aa)). A Mg(2+)-binding site is contributed by Gln672. Residues Asp697, Glu735, Asp767, and His901 contribute to the active site. A Mg(2+)-binding site is contributed by Leu926.

The protein belongs to the argonaute family. Piwi subfamily. Interacts (when symmetrically methylated) with Papi/TDRKH. Interacts with Vasa. The cofactor is Mg(2+). Post-translationally, arginine methylation is required for the interaction with Tudor domain-containing protein Papi/TDRKH. As to expression, highly expressed in the larval testis, pupal ovary and adult eggs.

The protein resides in the cytoplasm. Endoribonuclease that plays a central role during spermatogenesis by repressing transposable elements and preventing their mobilization, which is essential for the germline integrity. Plays an essential role in meiotic differentiation of spermatocytes, germ cell differentiation and in self-renewal of spermatogonial stem cells. Its presence in oocytes suggests that it may participate in similar functions during oogenesis in females. Acts via the piRNA metabolic process, which mediates the repression of transposable elements during meiosis by forming complexes composed of piRNAs and Piwi proteins and govern the methylation and subsequent repression of transposons. Directly binds piRNAs, a class of 24 to 30 nucleotide RNAs that are generated by a Dicer-independent mechanism and are primarily derived from transposons and other repeated sequence elements. Strongly prefers a have adenine at position 10 of their guide (g10A preference). Plays a key role in the piRNA amplification loop, also named ping-pong amplification cycle: antisense piRNA-bound Siwi and sense piRNA-bound Ago3 reciprocally cleave complementary transcripts, to couple the amplification of piRNAs with the repression of transposable elements. The protein is Piwi-like protein Ago3 (AGO3) of Bombyx mori (Silk moth).